Here is a 122-residue protein sequence, read N- to C-terminus: Large ribosomal subunit protein bL12 (122 aa).

Belongs to the bacterial ribosomal protein bL12 family. In terms of assembly, homodimer. Part of the ribosomal stalk of the 50S ribosomal subunit. Forms a multimeric L10(L12)X complex, where L10 forms an elongated spine to which 2 to 4 L12 dimers bind in a sequential fashion. Binds GTP-bound translation factors.

Forms part of the ribosomal stalk which helps the ribosome interact with GTP-bound translation factors. Is thus essential for accurate translation. This is Large ribosomal subunit protein bL12 from Deinococcus geothermalis (strain DSM 11300 / CIP 105573 / AG-3a).